A 667-amino-acid chain; its full sequence is MVDKIERIKELVEILNKYSYDYYVLDNPSVSDKDYDKEYDELKLLEKETGFVLPYSPTLRIGDVVLQGFNKYTHKGKLWSLDKAQSLDEIKDWHNRNIKFVNEMRAQGEDLPDLKYIATKKFDGLTVNLTYNKGGMLEVSATRGNGEIGENVTSQVKTIKSIPLKLQENDDLFEVHGEAIMTQEAFEKYNASADIPLKNLRNGAAGALRNLNIKETARRDLSAFFYDVGYKEGYQFKTYLEMMDFIKEKGLPIDEYLKVCTSIDDIKKEIEYIEKIRFDLNYDIDGLVIAIDDIRTRELLGYTVKYPKWAIAYKFEAQEATTKLLDVEWNVGRSGRIGPTAILEPVELAGVTVKRATLNNMDDIKRKGVRIGADVFVRRSNDVIPEIMGTLENTLENSEEICPPTECPACGSHVVLNGAHYFCENTLSCKPQLVKTIVHYASRDAMNIAGFSEKTAEQLFEKLNIKSISDLYKLKKEDLINLEKFGEKKSENLLNAIEKSKDCKLYSFIYALGIPNVGVKTAKDIVNKFKSIDGLKNATFEELVSVQDVGDIVAQDVIEFFKEEKVINTIDELLNLGVNPIFDEVKIVESIFKDKTVVTTGTLQNYSRTEIKTKLESLGAKVSGSVSKKTDYVIAGESAGSKLTKAEELGVKIISEEEFEKMLGRES.

NAD(+) contacts are provided by residues 32–36 (DKDYD) and 80–81 (SL). K121 acts as the N6-AMP-lysine intermediate in catalysis. Residues R143, E178, and K314 each coordinate NAD(+). Zn(2+) is bound by residues C407, C410, C423, and C429. The BRCT domain maps to 587–667 (IVESIFKDKT…EFEKMLGRES (81 aa)).

It belongs to the NAD-dependent DNA ligase family. LigA subfamily. Mg(2+) serves as cofactor. Mn(2+) is required as a cofactor.

It carries out the reaction NAD(+) + (deoxyribonucleotide)n-3'-hydroxyl + 5'-phospho-(deoxyribonucleotide)m = (deoxyribonucleotide)n+m + AMP + beta-nicotinamide D-nucleotide.. In terms of biological role, DNA ligase that catalyzes the formation of phosphodiester linkages between 5'-phosphoryl and 3'-hydroxyl groups in double-stranded DNA using NAD as a coenzyme and as the energy source for the reaction. It is essential for DNA replication and repair of damaged DNA. This chain is DNA ligase, found in Clostridium botulinum (strain Eklund 17B / Type B).